The primary structure comprises 187 residues: MSNVFQNTSTVTVLQGDYKVTTDPKVVFSTVLGSCIAACIYDEQVGVGGMNHFLLASSAGSGGVSARYGVHAMELLINGIMKKGALRSNLKAKVFGGAKMSANLSDIGANNADFVQRFLRDEGIPVISSSVGGTSARRVRFHACSGAAQQTHVADDRRLGEEERAAVARTQAAPARKPAAADNVTLF.

It belongs to the CheD family.

The enzyme catalyses L-glutaminyl-[protein] + H2O = L-glutamyl-[protein] + NH4(+). In terms of biological role, probably deamidates glutamine residues to glutamate on methyl-accepting chemotaxis receptors (MCPs), playing an important role in chemotaxis. The sequence is that of Probable chemoreceptor glutamine deamidase CheD 1 from Ruegeria sp. (strain TM1040) (Silicibacter sp.).